The sequence spans 87 residues: MRKGFVKEVLSKIKYDARENEEDYYIVIEHRGTYGNIKKIPVKMITLGHGYFFIEDTQIPYHRILAVIKKDGKVVWKKRGLGDEFKF.

This sequence belongs to the UPF0248 family.

This Thermococcus sibiricus (strain DSM 12597 / MM 739) protein is UPF0248 protein TSIB_1445.